Reading from the N-terminus, the 180-residue chain is Large ribosomal subunit protein uL5 (180 aa).

Belongs to the universal ribosomal protein uL5 family. In terms of assembly, part of the 50S ribosomal subunit; part of the 5S rRNA/L5/L18/L25 subcomplex. Contacts the 5S rRNA and the P site tRNA. Forms a bridge to the 30S subunit in the 70S ribosome.

In terms of biological role, this is one of the proteins that bind and probably mediate the attachment of the 5S RNA into the large ribosomal subunit, where it forms part of the central protuberance. In the 70S ribosome it contacts protein S13 of the 30S subunit (bridge B1b), connecting the 2 subunits; this bridge is implicated in subunit movement. Contacts the P site tRNA; the 5S rRNA and some of its associated proteins might help stabilize positioning of ribosome-bound tRNAs. The protein is Large ribosomal subunit protein uL5 of Latilactobacillus sakei subsp. sakei (strain 23K) (Lactobacillus sakei subsp. sakei).